The chain runs to 634 residues: Chaperone protein HtpG (634 aa).

The segment at 1 to 344 (MNETVANNKE…SNDLPLNVSR (344 aa)) is a; substrate-binding. Residues 345 to 561 (EILQDNKVTQ…DFEMGTQMAK (217 aa)) are b. The c stretch occupies residues 562 to 634 (LLAAAGQAVP…TAINSLLTKG (73 aa)).

Belongs to the heat shock protein 90 family. Homodimer.

The protein resides in the cytoplasm. Functionally, molecular chaperone. Has ATPase activity. The protein is Chaperone protein HtpG of Vibrio vulnificus (strain CMCP6).